The sequence spans 117 residues: Appetite-regulating hormone (117 aa).

The signal sequence occupies residues 1–23 (MVSSATICSLLLLSMLWMDMAMA). Ser26 carries the O-decanoyl serine; alternate lipid modification. Ser26 carries the O-hexanoyl serine; alternate lipid modification. Ser26 carries the O-octanoyl serine; alternate lipid modification. Positions 28–68 (LSPEHQKAQQRKESKKPPAKLQPRALEGWLHPEDRGQAEEA) are disordered. A compositionally biased stretch (basic and acidic residues) spans 31–43 (EHQKAQQRKESKK). Residues 52 to 75 (ALEGWLHPEDRGQAEEAEEELEIR) constitute a propeptide, removed in mature form. A Leucine amide modification is found at Leu98. A propeptide spans 99 to 117 (GKFLQDILWEEVKEAPANK) (removed in mature form).

It belongs to the motilin family. Post-translationally, O-octanoylated by GOAT/MBOAT4. O-octanoylation is essential for ghrelin activity. The replacement of Ser-26 by aromatic tryptophan preserves ghrelin activity. In terms of processing, amidation of Leu-98 is essential for obestatin activity. Ghrelin is broadly expressed with higher expression in the stomach. Very low levels are detected in the hypothalamus, heart, lung, pancreas, intestine and adipose tissue. Obestatin is most highly expressed in jejunum, and also found in duodenum, stomach, pituitary, ileum, liver, hypothalamus and heart. Expressed in low levels in pancreas, cerebellum, cerebrum, kidney, testis, ovary colon and lung.

The protein resides in the secreted. Functionally, ghrelin is the ligand for growth hormone secretagogue receptor type 1 (GHSR). Induces the release of growth hormone from the pituitary. Has an appetite-stimulating effect, induces adiposity and stimulates gastric acid secretion. Involved in growth regulation. Its function is as follows. Obestatin may be the ligand for GPR39. May have an appetite-reducing effect resulting in decreased food intake. May reduce gastric emptying activity and jejunal motility. This chain is Appetite-regulating hormone (Ghrl), found in Rattus norvegicus (Rat).